The primary structure comprises 460 residues: ATP synthase subunit beta (460 aa).

150-157 (GGAGVGKT) is an ATP binding site.

Belongs to the ATPase alpha/beta chains family. In terms of assembly, F-type ATPases have 2 components, CF(1) - the catalytic core - and CF(0) - the membrane proton channel. CF(1) has five subunits: alpha(3), beta(3), gamma(1), delta(1), epsilon(1). CF(0) has three main subunits: a(1), b(2) and c(9-12). The alpha and beta chains form an alternating ring which encloses part of the gamma chain. CF(1) is attached to CF(0) by a central stalk formed by the gamma and epsilon chains, while a peripheral stalk is formed by the delta and b chains.

The protein localises to the cell inner membrane. The catalysed reaction is ATP + H2O + 4 H(+)(in) = ADP + phosphate + 5 H(+)(out). Produces ATP from ADP in the presence of a proton gradient across the membrane. The catalytic sites are hosted primarily by the beta subunits. This is ATP synthase subunit beta from Edwardsiella ictaluri (strain 93-146).